The sequence spans 90 residues: MALDSAKKAEIVAKFAKKPGDTGSTEVQVALLTARIIELTEHLKIYKKDFSSRLGLLKLVGQRKRLLSYLKRKDYNSYSKLITELNLRDK.

Belongs to the universal ribosomal protein uS15 family. In terms of assembly, part of the 30S ribosomal subunit. Forms a bridge to the 50S subunit in the 70S ribosome, contacting the 23S rRNA.

Functionally, one of the primary rRNA binding proteins, it binds directly to 16S rRNA where it helps nucleate assembly of the platform of the 30S subunit by binding and bridging several RNA helices of the 16S rRNA. Its function is as follows. Forms an intersubunit bridge (bridge B4) with the 23S rRNA of the 50S subunit in the ribosome. This Campylobacter jejuni subsp. doylei (strain ATCC BAA-1458 / RM4099 / 269.97) protein is Small ribosomal subunit protein uS15.